A 459-amino-acid polypeptide reads, in one-letter code: Ribulose bisphosphate carboxylase large chain (459 aa).

Lys4 is subject to N6,N6,N6-trimethyllysine. Asn113 and Thr163 together coordinate substrate. Lys165 acts as the Proton acceptor in catalysis. Lys167 lines the substrate pocket. Mg(2+) contacts are provided by Lys191, Asp193, and Glu194. Residue Lys191 is modified to N6-carboxylysine. His284 serves as the catalytic Proton acceptor. 3 residues coordinate substrate: Arg285, His317, and Ser369.

It belongs to the RuBisCO large chain family. Type I subfamily. In terms of assembly, heterohexadecamer of 8 large chains and 8 small chains; disulfide-linked. The disulfide link is formed within the large subunit homodimers. It depends on Mg(2+) as a cofactor. In terms of processing, the disulfide bond which can form in the large chain dimeric partners within the hexadecamer appears to be associated with oxidative stress and protein turnover.

The protein localises to the plastid. It is found in the chloroplast. The enzyme catalyses 2 (2R)-3-phosphoglycerate + 2 H(+) = D-ribulose 1,5-bisphosphate + CO2 + H2O. It catalyses the reaction D-ribulose 1,5-bisphosphate + O2 = 2-phosphoglycolate + (2R)-3-phosphoglycerate + 2 H(+). In terms of biological role, ruBisCO catalyzes two reactions: the carboxylation of D-ribulose 1,5-bisphosphate, the primary event in carbon dioxide fixation, as well as the oxidative fragmentation of the pentose substrate in the photorespiration process. Both reactions occur simultaneously and in competition at the same active site. The protein is Ribulose bisphosphate carboxylase large chain of Heuchera micrantha (Alum root).